The following is a 229-amino-acid chain: Putative N-acetylmannosamine-6-phosphate 2-epimerase (229 aa).

This sequence belongs to the NanE family.

It carries out the reaction an N-acyl-D-glucosamine 6-phosphate = an N-acyl-D-mannosamine 6-phosphate. The protein operates within amino-sugar metabolism; N-acetylneuraminate degradation; D-fructose 6-phosphate from N-acetylneuraminate: step 3/5. In terms of biological role, converts N-acetylmannosamine-6-phosphate (ManNAc-6-P) to N-acetylglucosamine-6-phosphate (GlcNAc-6-P). This is Putative N-acetylmannosamine-6-phosphate 2-epimerase from Escherichia fergusonii (strain ATCC 35469 / DSM 13698 / CCUG 18766 / IAM 14443 / JCM 21226 / LMG 7866 / NBRC 102419 / NCTC 12128 / CDC 0568-73).